The primary structure comprises 113 residues: Putative pterin-4-alpha-carbinolamine dehydratase (113 aa).

Belongs to the pterin-4-alpha-carbinolamine dehydratase family.

It catalyses the reaction (4aS,6R)-4a-hydroxy-L-erythro-5,6,7,8-tetrahydrobiopterin = (6R)-L-erythro-6,7-dihydrobiopterin + H2O. This Idiomarina loihiensis (strain ATCC BAA-735 / DSM 15497 / L2-TR) protein is Putative pterin-4-alpha-carbinolamine dehydratase.